The sequence spans 436 residues: Protein disulfide-isomerase (436 aa).

The Thioredoxin domain occupies 216 to 365 (FLAGKIDPSI…VEDATESAKA (150 aa)). Catalysis depends on nucleophile residues Cys266 and Cys269. Cys266 and Cys269 form a disulfide bridge. The disordered stretch occupies residues 328–436 (TLVPHCRGSR…ASASSVKDEL (109 aa)). The segment covering 334 to 343 (RGSRPVHRRE) has biased composition (basic residues). Low complexity-rich tracts occupy residues 362–377 (SAKA…AASA) and 385–436 (VKSG…KDEL). Positions 433–436 (KDEL) match the Prevents secretion from ER motif.

It belongs to the protein disulfide isomerase family.

Its subcellular location is the endoplasmic reticulum lumen. The enzyme catalyses Catalyzes the rearrangement of -S-S- bonds in proteins.. Its function is as follows. Participates in the folding of proteins containing disulfide bonds, may be involved in glycosylation, prolyl hydroxylation and triglyceride transfer. The protein is Protein disulfide-isomerase of Alternaria alternata (Alternaria rot fungus).